The sequence spans 371 residues: Transcription factor bHLH77 (371 aa).

3 disordered regions span residues 1–25, 65–206, and 352–371; these read MNMD…FGNG, SGGI…SLAE, and QSNN…KLEP. Residues 85–96 show a composition bias toward polar residues; it reads SQPTTQESNKSS. Residues 128–142 show a composition bias toward low complexity; that stretch reads SPASSSLTASNSKVS. Residues 165–190 are compositionally biased toward basic and acidic residues; the sequence is GVEKCDSKGDNKDDAKPPEAPKDYIH. The bHLH domain occupies 197-247; it reads QATDSHSLAERARREKISERMTLLQDLVPGCNRITGKAVMLDEIINYVQSL.

Homodimer. Interacts with IBH1. In terms of tissue distribution, expressed constitutively in roots, leaves, stems, and flowers.

Its subcellular location is the nucleus. The sequence is that of Transcription factor bHLH77 (BHLH77) from Arabidopsis thaliana (Mouse-ear cress).